The chain runs to 574 residues: Interactor of HORMAD1 protein 1 (574 aa).

The tract at residues 113–133 (GLSKQFEEKKRRATDQSDSET) is disordered. Positions 117–127 (QFEEKKRRATD) are enriched in basic and acidic residues. Positions 217 to 240 (MEMKSTLKNLEVLVVEQTKNLQQF) form a coiled coil. Disordered stretches follow at residues 267-324 (GHLK…GVWD), 372-393 (FSNL…GASQ), and 426-457 (TEQK…DRKQ). Residues 272 to 284 (STSQTSPSLTQSL) show a composition bias toward low complexity. A compositionally biased stretch (polar residues) spans 372-381 (FSNLPSQRAG). Over residues 431-449 (RPCRKRRRGKKQQPQRSKR) the composition is skewed to basic residues. 3 positions are modified to phosphoserine: Ser-476, Ser-569, and Ser-570.

In terms of assembly, part of the MCD recombinosome complex, at least composed of IHO1, REC114 and MEI4. Interacts with REC114. Interacts with MEI4. Interacts with HORMAD1. Interacts with ANKRD31. As to expression, detected in spermatocytes and testis (at protein level).

It is found in the chromosome. Required for DNA double-strand breaks (DSBs) formation in unsynapsed regions during meiotic recombination. Probably acts by forming a complex with MEI4 and REC114, which activates DSBs formation in unsynapsed regions, an essential step to ensure completion of synapsis. Not required for HORMAD1 functions in pairing-independent synaptonemal complex formation, ATR recruitment to unsynapsed axes, meiotic silencing of unsynapsed chromatin (MSUC) or meiotic surveillance. In Mus musculus (Mouse), this protein is Interactor of HORMAD1 protein 1.